We begin with the raw amino-acid sequence, 320 residues long: tRNA dimethylallyltransferase (320 aa).

Position 14-21 (glycine 14–threonine 21) interacts with ATP. Threonine 16–threonine 21 is a substrate binding site. Interaction with substrate tRNA regions lie at residues aspartate 39–leucine 42 and glutamine 163–arginine 167.

Belongs to the IPP transferase family. In terms of assembly, monomer. It depends on Mg(2+) as a cofactor.

The catalysed reaction is adenosine(37) in tRNA + dimethylallyl diphosphate = N(6)-dimethylallyladenosine(37) in tRNA + diphosphate. Its function is as follows. Catalyzes the transfer of a dimethylallyl group onto the adenine at position 37 in tRNAs that read codons beginning with uridine, leading to the formation of N6-(dimethylallyl)adenosine (i(6)A). The sequence is that of tRNA dimethylallyltransferase from Thioalkalivibrio sulfidiphilus (strain HL-EbGR7).